Here is a 327-residue protein sequence, read N- to C-terminus: Vacuolar protein sorting-associated protein 26A (327 aa).

Residues 305–327 (RNFHQRYESPEPRPSLSAEQPEM) are disordered.

Belongs to the VPS26 family. Component of the heterotrimeric retromer cargo-selective complex (CSC) which is believed to associate with variable sorting nexins to form functionally distinct retromer complex variants.

It is found in the cytoplasm. It localises to the endosome membrane. The protein resides in the early endosome. Functionally, acts as a component of the retromer cargo-selective complex (CSC). The CSC is believed to be the core functional component of retromer or respective retromer complex variants acting to prevent missorting of selected transmembrane cargo proteins into the lysosomal degradation pathway. Retromer mediates retrograde transport of cargo proteins from endosomes to the trans-Golgi network (TGN). The sequence is that of Vacuolar protein sorting-associated protein 26A (vps26a) from Danio rerio (Zebrafish).